A 539-amino-acid chain; its full sequence is Peptide chain release factor 3 (539 aa).

The tr-type G domain maps to 14–283; the sequence is EKRRNFAIIS…AFLEYALQPE (270 aa). GTP is bound by residues 23–30, 91–95, and 145–148; these read SHPDAGKT, DTPGH, and NKLD.

The protein belongs to the TRAFAC class translation factor GTPase superfamily. Classic translation factor GTPase family. PrfC subfamily.

The protein localises to the cytoplasm. Increases the formation of ribosomal termination complexes and stimulates activities of RF-1 and RF-2. It binds guanine nucleotides and has strong preference for UGA stop codons. It may interact directly with the ribosome. The stimulation of RF-1 and RF-2 is significantly reduced by GTP and GDP, but not by GMP. This Rippkaea orientalis (strain PCC 8801 / RF-1) (Cyanothece sp. (strain PCC 8801)) protein is Peptide chain release factor 3.